The following is a 395-amino-acid chain: Chaperone protein DnaJ 1 (395 aa).

Residues 10 to 75 (DFYQELGVSS…AKRKEYDETR (66 aa)) form the J domain. The CR-type zinc-finger motif lies at 164 to 242 (GVAMPLRLTS…CKGTGVTTRT (79 aa)). Cys177, Cys180, Cys194, Cys197, Cys216, Cys219, Cys230, and Cys233 together coordinate Zn(2+). CXXCXGXG motif repeat units lie at residues 177-184 (CTNCHGSG), 194-201 (CPTCNGSG), 216-223 (CTDCRGSG), and 230-237 (CEECKGTG).

This sequence belongs to the DnaJ family. As to quaternary structure, homodimer. Zn(2+) is required as a cofactor.

The protein localises to the cytoplasm. Functionally, participates actively in the response to hyperosmotic and heat shock by preventing the aggregation of stress-denatured proteins and by disaggregating proteins, also in an autonomous, DnaK-independent fashion. Unfolded proteins bind initially to DnaJ; upon interaction with the DnaJ-bound protein, DnaK hydrolyzes its bound ATP, resulting in the formation of a stable complex. GrpE releases ADP from DnaK; ATP binding to DnaK triggers the release of the substrate protein, thus completing the reaction cycle. Several rounds of ATP-dependent interactions between DnaJ, DnaK and GrpE are required for fully efficient folding. Also involved, together with DnaK and GrpE, in the DNA replication of plasmids through activation of initiation proteins. This is Chaperone protein DnaJ 1 from Mycobacterium bovis (strain ATCC BAA-935 / AF2122/97).